Consider the following 217-residue polypeptide: NADPH-dependent 3-demethoxyubiquinone 3-hydroxylase, mitochondrial (217 aa).

The N-terminal 35 residues, 1 to 35 (MSCAGAAAAPRLWRLRPGARRSLSAYGRRTSVRFR), are a transit peptide targeting the mitochondrion. The required for nuclear localization stretch occupies residues 11-29 (RLWRLRPGARRSLSAYGRR). 2 repeat units span residues 48-129 (AVDR…TALL) and 130-217 (GKEG…SERL). The segment at 48–217 (AVDRIIRVDH…RVAIYLSERL (170 aa)) is 2 X approximate tandem repeats. Residue Arg-51 coordinates NADH. The Fe cation site is built by Glu-60, Glu-90, His-93, Glu-142, Glu-178, and His-181. The NADH site is built by Tyr-212 and Arg-216.

This sequence belongs to the COQ7 family. As to quaternary structure, component of a multi-subunit COQ enzyme complex. Interacts with COQ8B and COQ6. Interacts with COQ9. The cofactor is Fe cation. Expressed dominantly in heart and skeletal muscle.

It is found in the mitochondrion inner membrane. The protein localises to the mitochondrion. It localises to the nucleus. The protein resides in the chromosome. It carries out the reaction a 5-methoxy-2-methyl-3-(all-trans-polyprenyl)benzoquinone + NADH + O2 = a 3-demethylubiquinone + NAD(+) + H2O. It functions in the pathway cofactor biosynthesis; ubiquinone biosynthesis. Functionally, catalyzes the hydroxylation of the 5-methoxy-2-methyl-3-(all-trans-polyprenyl)benzoquinone at the C6 position and participates in the biosynthesis of ubiquinone. Catalyzes the reaction through a substrate-mediated reduction pathway, whereby NADH shuttles electrons to 5-methoxy-2-methyl-3-(all-trans-decaprenyl)benzoquinone, which then transfers the electrons to the two Fe(3+) centers. The binding of 5-methoxy-2-methyl-3-(all-trans-polyprenyl)benzoquinone (DMQn) mediates reduction of the diiron center by nicotinamide adenine dinucleotide (NADH) and initiates oxygen activation for subsequent DMQ hydroxylation. The physiological substrates are 5-methoxy-2-methyl-3-(all-trans-nonaprenyl)benzoquinone (DMQ(9)) and 5-methoxy-2-methyl-3-(all-trans-decaprenyl)benzoquinone (DMQ(10)), however in vitro the enzyme does not have any specificity concerning the length of the polyprenyl tail, and accepts tails of various lengths with similar efficiency. Also has a structural role in the COQ enzyme complex, stabilizing other COQ polypeptides. Involved in lifespan determination in a ubiquinone-independent manner. Plays a role in modulating mitochondrial stress responses, acting in the nucleus, perhaps via regulating gene expression, independent of its characterized mitochondrial function in ubiquinone biosynthesis. This is NADPH-dependent 3-demethoxyubiquinone 3-hydroxylase, mitochondrial from Homo sapiens (Human).